Reading from the N-terminus, the 562-residue chain is Membrane protein insertase YidC (562 aa).

Residues 1-21 (MDIKRTILIVALAIVTYVGVL) form a helical membrane-spanning segment. The interval 42–74 (TAPGIPDTAAGNNGSASADVPSATGNTTSAAPL) is disordered. The next 5 helical transmembrane spans lie at 343 to 363 (LELT…FWLL), 369 to 389 (ILGN…GLFF), 439 to 459 (LGGC…YWVL), 470 to 490 (WILW…PIIM), and 517 to 537 (PIIF…YWVV).

The protein belongs to the OXA1/ALB3/YidC family. Type 1 subfamily. As to quaternary structure, interacts with the Sec translocase complex via SecD. Specifically interacts with transmembrane segments of nascent integral membrane proteins during membrane integration.

It is found in the cell inner membrane. Functionally, required for the insertion and/or proper folding and/or complex formation of integral membrane proteins into the membrane. Involved in integration of membrane proteins that insert both dependently and independently of the Sec translocase complex, as well as at least some lipoproteins. Aids folding of multispanning membrane proteins. This Pseudomonas syringae pv. tomato (strain ATCC BAA-871 / DC3000) protein is Membrane protein insertase YidC.